A 56-amino-acid polypeptide reads, in one-letter code: Large ribosomal subunit protein bL32 (56 aa).

This sequence belongs to the bacterial ribosomal protein bL32 family.

The sequence is that of Large ribosomal subunit protein bL32 from Prochlorococcus marinus (strain MIT 9301).